The sequence spans 164 residues: Transcription antitermination protein NusB (164 aa).

Belongs to the NusB family.

Involved in transcription antitermination. Required for transcription of ribosomal RNA (rRNA) genes. Binds specifically to the boxA antiterminator sequence of the ribosomal RNA (rrn) operons. This Desulfovibrio desulfuricans (strain ATCC 27774 / DSM 6949 / MB) protein is Transcription antitermination protein NusB.